The chain runs to 363 residues: Aminomethyltransferase (363 aa).

Belongs to the GcvT family. As to quaternary structure, the glycine cleavage system is composed of four proteins: P, T, L and H.

It carries out the reaction N(6)-[(R)-S(8)-aminomethyldihydrolipoyl]-L-lysyl-[protein] + (6S)-5,6,7,8-tetrahydrofolate = N(6)-[(R)-dihydrolipoyl]-L-lysyl-[protein] + (6R)-5,10-methylene-5,6,7,8-tetrahydrofolate + NH4(+). Functionally, the glycine cleavage system catalyzes the degradation of glycine. This chain is Aminomethyltransferase, found in Prosthecochloris aestuarii (strain DSM 271 / SK 413).